The chain runs to 131 residues: Large ribosomal subunit protein bL19 (131 aa).

Residues 107–131 (GKSARIAERAERGSDKGKAAPAAAE) are disordered. The span at 111–124 (RIAERAERGSDKGK) shows a compositional bias: basic and acidic residues.

Belongs to the bacterial ribosomal protein bL19 family.

In terms of biological role, this protein is located at the 30S-50S ribosomal subunit interface and may play a role in the structure and function of the aminoacyl-tRNA binding site. This is Large ribosomal subunit protein bL19 from Methylobacterium sp. (strain 4-46).